A 756-amino-acid polypeptide reads, in one-letter code: Subtilisin-like protease SBT3.9 (756 aa).

An N-terminal signal peptide occupies residues 1–25 (MSKTILFLALFLSIVLNVQISFVVA). The propeptide at 26–108 (ESKVYVVYLG…VIPNTLYEMT (83 aa)) is activation peptide. Positions 29 to 106 (VYVVYLGEKE…VQVIPNTLYE (78 aa)) constitute an Inhibitor I9 domain. Residues 112-603 (TWDYLGVSPG…GGLINPEKAV (492 aa)) enclose the Peptidase S8 domain. Catalysis depends on aspartate 142, which acts as the Charge relay system. Asparagine 175 and asparagine 202 each carry an N-linked (GlcNAc...) asparagine glycan. Residue histidine 218 is the Charge relay system of the active site. N-linked (GlcNAc...) asparagine glycosylation is found at asparagine 233, asparagine 357, asparagine 395, and asparagine 519. The region spanning 386–460 (DCEKLSANPN…ELGTDILFYI (75 aa)) is the PA domain. The active-site Charge relay system is the serine 534.

It belongs to the peptidase S8 family.

The protein resides in the secreted. In Arabidopsis thaliana (Mouse-ear cress), this protein is Subtilisin-like protease SBT3.9.